A 448-amino-acid chain; its full sequence is Probable glycine dehydrogenase (decarboxylating) subunit 1 (448 aa).

The protein belongs to the GcvP family. N-terminal subunit subfamily. In terms of assembly, the glycine cleavage system is composed of four proteins: P, T, L and H. In this organism, the P 'protein' is a heterodimer of two subunits.

It catalyses the reaction N(6)-[(R)-lipoyl]-L-lysyl-[glycine-cleavage complex H protein] + glycine + H(+) = N(6)-[(R)-S(8)-aminomethyldihydrolipoyl]-L-lysyl-[glycine-cleavage complex H protein] + CO2. Its function is as follows. The glycine cleavage system catalyzes the degradation of glycine. The P protein binds the alpha-amino group of glycine through its pyridoxal phosphate cofactor; CO(2) is released and the remaining methylamine moiety is then transferred to the lipoamide cofactor of the H protein. This Anoxybacillus flavithermus (strain DSM 21510 / WK1) protein is Probable glycine dehydrogenase (decarboxylating) subunit 1.